The primary structure comprises 265 residues: Thiazole synthase (265 aa).

The Schiff-base intermediate with DXP role is filled by lysine 103. 1-deoxy-D-xylulose 5-phosphate-binding positions include glycine 164, 190 to 191, and 212 to 213; these read AG and NT.

The protein belongs to the ThiG family. In terms of assembly, homotetramer. Forms heterodimers with either ThiH or ThiS.

The protein localises to the cytoplasm. The enzyme catalyses [ThiS sulfur-carrier protein]-C-terminal-Gly-aminoethanethioate + 2-iminoacetate + 1-deoxy-D-xylulose 5-phosphate = [ThiS sulfur-carrier protein]-C-terminal Gly-Gly + 2-[(2R,5Z)-2-carboxy-4-methylthiazol-5(2H)-ylidene]ethyl phosphate + 2 H2O + H(+). Its pathway is cofactor biosynthesis; thiamine diphosphate biosynthesis. In terms of biological role, catalyzes the rearrangement of 1-deoxy-D-xylulose 5-phosphate (DXP) to produce the thiazole phosphate moiety of thiamine. Sulfur is provided by the thiocarboxylate moiety of the carrier protein ThiS. In vitro, sulfur can be provided by H(2)S. The polypeptide is Thiazole synthase (Bordetella avium (strain 197N)).